The primary structure comprises 47 residues: Bacteriocin curvaticin DN317 (47 aa).

The protein belongs to the bacteriocin class IIA/YGNGV family.

It localises to the secreted. Functionally, has bactericidal activity against various Gram-negative Campylobacter, and the Gram-positive L.monocytogenes and B.subtilis. In vitro, inhibits C.jejuni strain ATCC 33560 (MIC=27.3 ug/ml). The protein is Bacteriocin curvaticin DN317 of Latilactobacillus curvatus (Lactobacillus curvatus).